The following is a 471-amino-acid chain: MQIDVDPQEDPQNAPDVNYVVENPTLDLEQYAASYSGLMRIERLQFIADRCPPLRVEALKMALSFVQRTFNVDMYEEIHRKLSEATRELQNAPDAIPESGVEPPPLDTAWVEATRKKALLKLEKLDTDLKNYKGNSIKESIRRGHDDLGDHYLDCGDLSNALKCYSRARDYCTSAKHVINMCLNVIKVSVYLQNWSHVLSYVSKAESTPEIAEQRGERDSQTQAILTKLKCAAGLAELAARKYKQAAKCFLLASFDHCDFPELLSPSNVAVYGGLCALATFDRQELQRNVISSSSFKLFLELEPQVRDIIFKFYESKYASCLKMLDEMKDNLLLDMYLAPHVRTLYTQIRNRALIQYFSPYVSADMHKMAAAFNTTVAALEDELTQLILEGLINARIDSHSKILYARDVDQRSTTFEKSLLMGKEFQRRAKAMILRAAVLRNQIHVKSPPREGSQGELTPANSQSRMSTNM.

Residues 249–411 (CFLLASFDHC…KILYARDVDQ (163 aa)) form the PCI domain. The interval 445–471 (HVKSPPREGSQGELTPANSQSRMSTNM) is disordered. Phosphoserine occurs at positions 448 and 454. Residues 456-471 (GELTPANSQSRMSTNM) are compositionally biased toward polar residues. Position 459 is a phosphothreonine (Thr459). Ser463 is modified (phosphoserine).

The protein belongs to the CSN1 family. Component of the CSN complex, composed of COPS1/GPS1, COPS2, COPS3, COPS4, COPS5, COPS6, COPS7 (COPS7A or COPS7B), COPS8 and COPS9. In the complex, it probably interacts directly with COPS2, COPS3, COPS4 and COPS5. Interacts directly with inositol kinase ITPK1. Interacts with CAPN8. Interacts with USP48. Interacts with ASB4; this interaction negatively regulates GPS1. In terms of tissue distribution, expressed in the base region of the oxyntic and pyloric mucosae.

Its subcellular location is the cytoplasm. The protein localises to the nucleus. In terms of biological role, essential component of the COP9 signalosome complex (CSN), a complex involved in various cellular and developmental processes. The CSN complex is an essential regulator of the ubiquitin (Ubl) conjugation pathway by mediating the deneddylation of the cullin subunits of SCF-type E3 ligase complexes, leading to decrease the Ubl ligase activity of SCF-type complexes such as SCF, CSA or DDB2. The complex is also involved in phosphorylation of p53/TP53, c-jun/JUN, IkappaBalpha/NFKBIA, ITPK1 and IRF8/ICSBP, possibly via its association with CK2 and PKD kinases. CSN-dependent phosphorylation of TP53 and JUN promotes and protects degradation by the Ubl system, respectively. Suppresses G-protein- and mitogen-activated protein kinase-mediated signal transduction. This chain is COP9 signalosome complex subunit 1 (Gps1), found in Mus musculus (Mouse).